A 289-amino-acid polypeptide reads, in one-letter code: Rhodopsin (289 aa).

Over 1–7 (YLVSPAA) the chain is Extracellular. The chain crosses the membrane as a helical span at residues 8 to 32 (YAALGAYMFLLILIGFPVNFLTLYV). The Cytoplasmic segment spans residues 33-44 (TLEHKKLRTPLN). The helical transmembrane segment at 45–67 (YILLNLAVADLFMVLGGFTTTMY) threads the bilayer. The Extracellular portion of the chain corresponds to 68–81 (TSMHGYFVLGRLGC). Residues cysteine 81 and cysteine 158 are joined by a disulfide bond. A helical membrane pass occupies residues 82-104 (NLEGFFATLGGEIALWSLVVLAI). The short motif at 105–107 (ERW) is the 'Ionic lock' involved in activated form stabilization element. Residues 105-123 (ERWIVVCKPISNFRFTEDN) lie on the Cytoplasmic side of the membrane. The chain crosses the membrane as a helical span at residues 124–144 (AIMGLAFSWVMALTCAVPPLV). The Extracellular portion of the chain corresponds to 145 to 173 (GWSRYIPEGMQCSCGVDYYTRAEGFNNES). Asparagine 171 carries N-linked (GlcNAc...) asparagine glycosylation. Residues 174–195 (FVIYMFIVHFPIPLSVIFFCYG) traverse the membrane as a helical segment. Residues 196-223 (RLLCAVKEAAAAQQESETTQRAEKEVSR) lie on the Cytoplasmic side of the membrane. The helical transmembrane segment at 224-245 (MVVILVIGFLVCWLPYASVAWW) threads the bilayer. Over 246-257 (IFCNQGSDFGPI) the chain is Extracellular. A helical membrane pass occupies residues 258 to 279 (FMTLPSFFAKRPAIYNPMIYIC). At lysine 267 the chain carries N6-(retinylidene)lysine. At 280–289 (MNKQFRHCMI) the chain is on the cytoplasmic side.

This sequence belongs to the G-protein coupled receptor 1 family. Opsin subfamily. Phosphorylated on some or all of the serine and threonine residues present in the C-terminal region. In terms of processing, contains one covalently linked retinal chromophore.

The protein localises to the membrane. Its subcellular location is the cell projection. The protein resides in the cilium. It is found in the photoreceptor outer segment. Its function is as follows. Photoreceptor required for image-forming vision at low light intensity. While most salt water fish species use retinal as chromophore, most freshwater fish use 3-dehydroretinal, or a mixture of retinal and 3-dehydroretinal. Light-induced isomerization of 11-cis to all-trans retinal triggers a conformational change that activates signaling via G-proteins. Subsequent receptor phosphorylation mediates displacement of the bound G-protein alpha subunit by arrestin and terminates signaling. This is Rhodopsin (rho) from Batrachocottus multiradiatus (Baikal sculpin).